A 1025-amino-acid chain; its full sequence is Dihydropyrimidine dehydrogenase [NADP(+)] (1025 aa).

The propeptide occupies 1–3 (MAP). The 32-residue stretch at 69–100 (ERGALREAMRCLKCADAPCQKSCPTHLDIKSF) folds into the 4Fe-4S ferredoxin-type 1 domain. 4 residues coordinate [4Fe-4S] cluster: Cys79, Cys82, Cys87, and Cys91. Val129 is an FAD binding site. Residues Cys130, Cys136, Cys140, and Gln156 each contribute to the [4Fe-4S] cluster site. Residues 194–198 (GAGPA), 218–226 (EKQEYVGGL), Arg235, and Leu261 each bind FAD. NADP(+)-binding positions include 340-343 (AGDT), 364-365 (RK), and Arg371. Position 384 is an N6-acetyllysine (Lys384). NADP(+) is bound by residues 437 to 439 (AFG) and 481 to 487 (DIVGMAN). 480–489 (GDIVGMANTT) lines the FAD pocket. Residues Ser550 and 574–575 (KT) each bind FMN. Substrate contacts are provided by residues Asn609 and 668–670 (NLS). The active-site Proton acceptor is Cys671. Lys709 provides a ligand contact to FMN. 736 to 737 (NT) provides a ligand contact to substrate. FMN-binding positions include Gly767, 793–795 (TGG), and 816–817 (CS). 2 4Fe-4S ferredoxin-type domains span residues 944–976 (VVAV…FDPE) and 978–1007 (HLPT…MVSR). Cys953, Cys956, Cys959, Cys963, Cys986, Cys989, Cys992, and Cys996 together coordinate [4Fe-4S] cluster.

The protein belongs to the dihydropyrimidine dehydrogenase family. In terms of assembly, homodimer. FAD serves as cofactor. It depends on FMN as a cofactor. Requires [4Fe-4S] cluster as cofactor.

It is found in the cytoplasm. The catalysed reaction is 5,6-dihydrouracil + NADP(+) = uracil + NADPH + H(+). The enzyme catalyses 5,6-dihydrothymine + NADP(+) = thymine + NADPH + H(+). It functions in the pathway amino-acid biosynthesis; beta-alanine biosynthesis. With respect to regulation, inactivated by 5-iodouracil. Its function is as follows. Involved in pyrimidine base degradation. Catalyzes the reduction of uracil and thymine. The protein is Dihydropyrimidine dehydrogenase [NADP(+)] (DPYD) of Sus scrofa (Pig).